The primary structure comprises 870 residues: Leucine--tRNA ligase (870 aa).

The 'HIGH' region signature appears at 55 to 65 (PYPSGTLHMGH). The 'KMSKS' region motif lies at 626-630 (KMSKS). Lys-629 is a binding site for ATP.

It belongs to the class-I aminoacyl-tRNA synthetase family.

Its subcellular location is the cytoplasm. It catalyses the reaction tRNA(Leu) + L-leucine + ATP = L-leucyl-tRNA(Leu) + AMP + diphosphate. The polypeptide is Leucine--tRNA ligase (Prochlorococcus marinus (strain SARG / CCMP1375 / SS120)).